Here is a 159-residue protein sequence, read N- to C-terminus: 3-hydroxyacyl-[acyl-carrier-protein] dehydratase FabZ (159 aa).

The active site involves His58.

Belongs to the thioester dehydratase family. FabZ subfamily.

It localises to the cytoplasm. It catalyses the reaction a (3R)-hydroxyacyl-[ACP] = a (2E)-enoyl-[ACP] + H2O. In terms of biological role, involved in unsaturated fatty acids biosynthesis. Catalyzes the dehydration of short chain beta-hydroxyacyl-ACPs and long chain saturated and unsaturated beta-hydroxyacyl-ACPs. The sequence is that of 3-hydroxyacyl-[acyl-carrier-protein] dehydratase FabZ from Helicobacter pylori (strain P12).